Consider the following 260-residue polypeptide: Enoyl-[acyl-carrier-protein] reductase [NADH] FabI (260 aa).

NAD(+) contacts are provided by residues glycine 13, 19–20 (SI), glutamine 40, 64–65 (DV), and isoleucine 92. Residues tyrosine 146 and tyrosine 156 each act as proton acceptor in the active site. Residues lysine 163 and 192 to 196 (IKTIS) contribute to the NAD(+) site.

The protein belongs to the short-chain dehydrogenases/reductases (SDR) family. FabI subfamily. As to quaternary structure, homotetramer.

It catalyses the reaction a 2,3-saturated acyl-[ACP] + NAD(+) = a (2E)-enoyl-[ACP] + NADH + H(+). It participates in lipid metabolism; fatty acid biosynthesis. The protein operates within cofactor biosynthesis; biotin biosynthesis. Its function is as follows. Catalyzes the reduction of a carbon-carbon double bond in an enoyl moiety that is covalently linked to an acyl carrier protein (ACP). Involved in the elongation cycle of fatty acid which are used in the lipid metabolism and in the biotin biosynthesis. This Buchnera aphidicola subsp. Acyrthosiphon pisum (strain APS) (Acyrthosiphon pisum symbiotic bacterium) protein is Enoyl-[acyl-carrier-protein] reductase [NADH] FabI (fabI).